We begin with the raw amino-acid sequence, 459 residues long: Nuclear distribution protein PAC1-2 (459 aa).

Residues 56–83 (TSIVRLQKKIMDLESRNAALQTELANLT) are a coiled coil. 8 WD repeats span residues 108-149 (SHRD…RTVK), 151-191 (HTRA…KNIR), 195-244 (GHDH…KTLR), 246-284 (HTAW…SDHK), 306-348 (QYLA…LGTL), 350-389 (GHDN…KCVK), 394-438 (AHER…DTPD), and 440-459 (QVRC…VFAD).

It belongs to the WD repeat LIS1/nudF family. In terms of assembly, self-associates. Interacts with NDL1 and dynein.

It localises to the cytoplasm. The protein localises to the cytoskeleton. It is found in the spindle pole. In terms of biological role, positively regulates the activity of the minus-end directed microtubule motor protein dynein. May enhance dynein-mediated microtubule sliding by targeting dynein to the microtubule plus end. Required for nuclear migration during vegetative growth as well as development. Required for retrograde early endosome (EE) transport from the hyphal tip. Required for localization of dynein to the mitotic spindle poles. Recruits additional proteins to the dynein complex at SPBs. The chain is Nuclear distribution protein PAC1-2 from Uncinocarpus reesii (strain UAMH 1704).